We begin with the raw amino-acid sequence, 565 residues long: Heme/hemopexin transporter protein HuxB (565 aa).

The first 26 residues, 1–26, serve as a signal peptide directing secretion; sequence MKMRPRYSVIASAVSLGFVLSKSVMA. Residues 73–150 form the POTRA domain; it reads FPLTQVQILD…GTVKILLLKG (78 aa).

Belongs to the TPS (TC 1.B.20) family.

It localises to the cell outer membrane. In terms of biological role, likely functions in the release of soluble HxuA from the cell. Its function is as follows. Probable member of a two partner secretion pathway (TPS) in which it mediates the secretion of HuxA. This chain is Heme/hemopexin transporter protein HuxB (hxuB), found in Haemophilus influenzae.